Consider the following 86-residue polypeptide: Small ribosomal subunit protein bS18 (86 aa).

The protein belongs to the bacterial ribosomal protein bS18 family. As to quaternary structure, part of the 30S ribosomal subunit. Forms a tight heterodimer with protein bS6.

Its function is as follows. Binds as a heterodimer with protein bS6 to the central domain of the 16S rRNA, where it helps stabilize the platform of the 30S subunit. The chain is Small ribosomal subunit protein bS18 from Heliobacterium modesticaldum (strain ATCC 51547 / Ice1).